A 92-amino-acid polypeptide reads, in one-letter code: Protamine-2 (92 aa).

The disordered stretch occupies residues 1-76 (MVRCRVRSPS…RRACRHRRHR (76 aa)). Residues 7 to 20 (RSPSESPQQGSGQQ) show a composition bias toward low complexity. A phosphoserine mark is found at Ser8 and Ser10. The span at 21–36 (RENERQDQDQELRPED) shows a compositional bias: basic and acidic residues. A compositionally biased stretch (basic residues) spans 42–76 (RTHRGRYHYRHRSHTRRRRSCRRRRRRACRHRRHR).

The protein belongs to the protamine P2 family. As to quaternary structure, interacts with TDRP. In terms of processing, proteolytic processing into mature chains is required for histone eviction during spermatogenesis. Transition proteins (TNP1 and TNP2) are required for processing. Testis.

The protein resides in the nucleus. It is found in the chromosome. Its function is as follows. Protamines substitute for histones in the chromatin of sperm during the haploid phase of spermatogenesis. They compact sperm DNA into a highly condensed, stable and inactive complex. The sequence is that of Protamine-2 (PRM2) from Sus scrofa (Pig).